A 368-amino-acid polypeptide reads, in one-letter code: Chaperone protein DnaJ (368 aa).

A J domain is found at 5–65; sequence DYYEVLGLTK…QKKARYDQFG (61 aa). A CR-type zinc finger spans residues 125–207; it reads GKETEIEIPK…CRGEGKVQKR (83 aa). Zn(2+) contacts are provided by cysteine 138, cysteine 141, cysteine 155, cysteine 158, cysteine 181, cysteine 184, cysteine 195, and cysteine 198. CXXCXGXG motif repeat units lie at residues 138–145, 155–162, 181–188, and 195–202; these read CETCHGSG, CSTCNGAG, CTTCHGTG, and CSTCRGEG.

The protein belongs to the DnaJ family. Homodimer. It depends on Zn(2+) as a cofactor.

Its subcellular location is the cytoplasm. Its function is as follows. Participates actively in the response to hyperosmotic and heat shock by preventing the aggregation of stress-denatured proteins and by disaggregating proteins, also in an autonomous, DnaK-independent fashion. Unfolded proteins bind initially to DnaJ; upon interaction with the DnaJ-bound protein, DnaK hydrolyzes its bound ATP, resulting in the formation of a stable complex. GrpE releases ADP from DnaK; ATP binding to DnaK triggers the release of the substrate protein, thus completing the reaction cycle. Several rounds of ATP-dependent interactions between DnaJ, DnaK and GrpE are required for fully efficient folding. Also involved, together with DnaK and GrpE, in the DNA replication of plasmids through activation of initiation proteins. This Lysinibacillus sphaericus (Bacillus sphaericus) protein is Chaperone protein DnaJ.